Reading from the N-terminus, the 537-residue chain is Tyrosine-protein kinase Fyn (537 aa).

Residue G2 is the site of N-myristoyl glycine attachment. Residues C3 and C6 are each lipidated (S-palmitoyl cysteine). A Phosphothreonine; by PKC modification is found at T12. The disordered stretch occupies residues 14 to 35; sequence LTEERDGSLNQSSGYRYGTDPT. Phosphoserine is present on residues S21 and S26. Residues 82–143 enclose the SH3 domain; sequence TGVTLFVALY…PSNYVAPVDS (62 aa). In terms of domain architecture, SH2 spans 149-246; the sequence is WYFGKLGRKD…GLCCRLVVPC (98 aa). The residue at position 185 (Y185) is a Phosphotyrosine. One can recognise a Protein kinase domain in the interval 271-524; the sequence is LQLIKRLGNG…YLQGFLEDYF (254 aa). Residues 277-285 and K299 contribute to the ATP site; that span reads LGNGQFGEV. D390 functions as the Proton acceptor in the catalytic mechanism. Y420 bears the Phosphotyrosine; by autocatalysis mark. Y531 carries the phosphotyrosine; by CSK modification.

It belongs to the protein kinase superfamily. Tyr protein kinase family. SRC subfamily. Interacts (via its SH3 domain) with PIK3R1 and PRMT8. Interacts with FYB1, PAG1, and SH2D1A. Interacts with CD79A (tyrosine-phosphorylated form); the interaction increases FYN activity. Interacts (via SH2 domain) with CSF1R (tyrosine phosphorylated). Interacts with TOM1L1 (phosphorylated form). Interacts with KDR (tyrosine phosphorylated). Interacts (via SH3 domain) with KLHL2 (via N-terminus). Interacts with SH2D1A and SLAMF1. Interacts with ITCH; the interaction phosphorylates ITCH and negatively regulates its activity. Interacts with FASLG. Interacts with RUNX3. Interacts with KIT. Interacts with EPHA8; possible downstream effector of EPHA8 in regulation of cell adhesion. Interacts with PTK2/FAK1; this interaction leads to PTK2/FAK1 phosphorylation and activation. Interacts with CAV1; this interaction couples integrins to the Ras-ERK pathway. Interacts with UNC119. Interacts (via SH2 domain) with PTPRH (phosphorylated form). Interacts with PTPRO (phosphorylated form). Interacts with PTPRB (phosphorylated form). Interacts with FYB2. Interacts with DSCAM. Interacts with SKAP1 and FYB1; this interaction promotes the phosphorylation of CLNK. Interacts with NEDD9; in the presence of PTK2. Mn(2+) is required as a cofactor. Post-translationally, autophosphorylated at Tyr-420. Phosphorylation on the C-terminal tail at Tyr-531 by CSK maintains the enzyme in an inactive state. PTPRC/CD45 dephosphorylates Tyr-531 leading to activation. Ultraviolet B (UVB) strongly increase phosphorylation at Thr-12 and kinase activity, and promotes translocation from the cytoplasm to the nucleus. Dephosphorylation at Tyr-420 by PTPN2 negatively regulates T-cell receptor signaling. Phosphorylated at tyrosine residues, which can be enhanced by NTN1. Palmitoylated. Palmitoylation at Cys-3 and Cys-6, probably by ZDHHC21, regulates subcellular location.

It localises to the cytoplasm. The protein resides in the nucleus. It is found in the cell membrane. Its subcellular location is the perikaryon. The catalysed reaction is L-tyrosyl-[protein] + ATP = O-phospho-L-tyrosyl-[protein] + ADP + H(+). With respect to regulation, inhibited by phosphorylation of Tyr-531 by leukocyte common antigen and activated by dephosphorylation of this site. In terms of biological role, non-receptor tyrosine-protein kinase that plays a role in many biological processes including regulation of cell growth and survival, cell adhesion, integrin-mediated signaling, cytoskeletal remodeling, cell motility, immune response and axon guidance. Inactive FYN is phosphorylated on its C-terminal tail within the catalytic domain. Following activation by PKA, the protein subsequently associates with PTK2/FAK1, allowing PTK2/FAK1 phosphorylation, activation and targeting to focal adhesions. Involved in the regulation of cell adhesion and motility through phosphorylation of CTNNB1 (beta-catenin) and CTNND1 (delta-catenin). Regulates cytoskeletal remodeling by phosphorylating several proteins including the actin regulator WAS and the microtubule-associated proteins MAP2 and MAPT. Promotes cell survival by phosphorylating AGAP2/PIKE-A and preventing its apoptotic cleavage. Participates in signal transduction pathways that regulate the integrity of the glomerular slit diaphragm (an essential part of the glomerular filter of the kidney) by phosphorylating several slit diaphragm components including NPHS1, KIRREL1 and TRPC6. Plays a role in neural processes by phosphorylating DPYSL2, a multifunctional adapter protein within the central nervous system, ARHGAP32, a regulator for Rho family GTPases implicated in various neural functions, and SNCA, a small pre-synaptic protein. Involved in reelin signaling by mediating phosphorylation of DAB1 following reelin (RELN)-binding to its receptor. Participates in the downstream signaling pathways that lead to T-cell differentiation and proliferation following T-cell receptor (TCR) stimulation. Phosphorylates PTK2B/PYK2 in response to T-cell receptor activation. Also participates in negative feedback regulation of TCR signaling through phosphorylation of PAG1, thereby promoting interaction between PAG1 and CSK and recruitment of CSK to lipid rafts. CSK maintains LCK and FYN in an inactive form. Promotes CD28-induced phosphorylation of VAV1. In mast cells, phosphorylates CLNK after activation of immunoglobulin epsilon receptor signaling. Can also promote CD244-mediated NK cell activation. This chain is Tyrosine-protein kinase Fyn, found in Bos taurus (Bovine).